A 172-amino-acid chain; its full sequence is NADH-quinone oxidoreductase subunit B (172 aa).

4 residues coordinate [4Fe-4S] cluster: Cys46, Cys47, Cys111, and Cys141.

The protein belongs to the complex I 20 kDa subunit family. NDH-1 is composed of 14 different subunits. Subunits NuoB, C, D, E, F, and G constitute the peripheral sector of the complex. Requires [4Fe-4S] cluster as cofactor.

The protein localises to the cell membrane. The enzyme catalyses a quinone + NADH + 5 H(+)(in) = a quinol + NAD(+) + 4 H(+)(out). NDH-1 shuttles electrons from NADH, via FMN and iron-sulfur (Fe-S) centers, to quinones in the respiratory chain. The immediate electron acceptor for the enzyme in this species is believed to be a menaquinone. Couples the redox reaction to proton translocation (for every two electrons transferred, four hydrogen ions are translocated across the cytoplasmic membrane), and thus conserves the redox energy in a proton gradient. This chain is NADH-quinone oxidoreductase subunit B, found in Bacillus anthracis (strain A0248).